The primary structure comprises 608 residues: 1-deoxy-D-xylulose-5-phosphate synthase (608 aa).

Residues histidine 66 and 107–109 (GHA) contribute to the thiamine diphosphate site. Aspartate 138 lines the Mg(2+) pocket. Thiamine diphosphate-binding positions include 139 to 140 (GA), asparagine 167, phenylalanine 277, and glutamate 350. Asparagine 167 provides a ligand contact to Mg(2+).

Belongs to the transketolase family. DXPS subfamily. In terms of assembly, homodimer. It depends on Mg(2+) as a cofactor. The cofactor is thiamine diphosphate.

It carries out the reaction D-glyceraldehyde 3-phosphate + pyruvate + H(+) = 1-deoxy-D-xylulose 5-phosphate + CO2. The protein operates within metabolic intermediate biosynthesis; 1-deoxy-D-xylulose 5-phosphate biosynthesis; 1-deoxy-D-xylulose 5-phosphate from D-glyceraldehyde 3-phosphate and pyruvate: step 1/1. Its function is as follows. Catalyzes the acyloin condensation reaction between C atoms 2 and 3 of pyruvate and glyceraldehyde 3-phosphate to yield 1-deoxy-D-xylulose-5-phosphate (DXP). The chain is 1-deoxy-D-xylulose-5-phosphate synthase from Thermotoga petrophila (strain ATCC BAA-488 / DSM 13995 / JCM 10881 / RKU-1).